We begin with the raw amino-acid sequence, 124 residues long: Small ribosomal subunit protein uS12 (124 aa).

Residues 1-25 (MPTINQLIRKPRKSQKEKTASPALQ) are disordered. Residue aspartate 89 is modified to 3-methylthioaspartic acid.

It belongs to the universal ribosomal protein uS12 family. Part of the 30S ribosomal subunit. Contacts proteins S8 and S17. May interact with IF1 in the 30S initiation complex.

Functionally, with S4 and S5 plays an important role in translational accuracy. Interacts with and stabilizes bases of the 16S rRNA that are involved in tRNA selection in the A site and with the mRNA backbone. Located at the interface of the 30S and 50S subunits, it traverses the body of the 30S subunit contacting proteins on the other side and probably holding the rRNA structure together. The combined cluster of proteins S8, S12 and S17 appears to hold together the shoulder and platform of the 30S subunit. In Borrelia turicatae (strain 91E135), this protein is Small ribosomal subunit protein uS12.